The sequence spans 206 residues: Thymidylate kinase (206 aa).

Residue 11–18 coordinates ATP; the sequence is GIDGAGKT.

The protein belongs to the thymidylate kinase family.

The catalysed reaction is dTMP + ATP = dTDP + ADP. In terms of biological role, phosphorylation of dTMP to form dTDP in both de novo and salvage pathways of dTTP synthesis. In Paraburkholderia phytofirmans (strain DSM 17436 / LMG 22146 / PsJN) (Burkholderia phytofirmans), this protein is Thymidylate kinase.